A 611-amino-acid polypeptide reads, in one-letter code: Chloroplast sensor kinase, chloroplastic (611 aa).

A chloroplast-targeting transit peptide spans 1–79; that stretch reads MLLSAIASQT…PGGGETMVAS (79 aa). Residues 17–50 are disordered; the sequence is NLHFSNSIPNPRPSNPSLKLLNASSSSSSSSSSS. Residues 40–50 are compositionally biased toward low complexity; the sequence is SSSSSSSSSSS. The interval 116 to 300 is GAF; it reads DFQRLCLEQL…VMDQKTMLLQ (185 aa). Residue Cys121 coordinates [3Fe-4S] cluster. Ser188 carries the post-translational modification Phosphoserine. In terms of domain architecture, Histidine kinase spans 312 to 602; the sequence is KLVEQIRGPL…RVELWLPAFP (291 aa). The stretch at 345–380 forms a coiled coil; sequence VEDLIVQGDQIKDTLEELQDAVHLTKANIVRHNEEA. A compositionally biased stretch (basic and acidic residues) spans 385 to 402; the sequence is NKTHNETRRSKYEHKDPI. The disordered stretch occupies residues 385–420; it reads NKTHNETRRSKYEHKDPIDGSQISSTRLSLGSGLDD.

The protein belongs to the chloroplast sensor kinase protein family. In terms of assembly, self-interacts. Interacts with the plastoquinone analog 2,5-dibromo-3-methyl-5-isopropyl-p-benzoquinone (DBMIB) and with SIGA/SIG1. Requires [3Fe-4S] cluster as cofactor. Post-translationally, autophosphorylated, possibly on tyrosine residues, in photosystem I (PS I) light and in the presence of manganese ions Mn(2+), to a lesser degree, in the presence of calcium ions Ca(2+), but not in the presence of magnesium ions Mg(2+). Dithiothreitol (DTT) stimulates autophosphorylation. Phosphorylated on Ser-188 in vivo after exposure to far-red light (when plastoquinone (PQ) is oxidized). Not phosphorylated under orange light (reduces PQ).

It is found in the plastid. The protein resides in the chloroplast stroma. The catalysed reaction is L-tyrosyl-[protein] + ATP = O-phospho-L-tyrosyl-[protein] + ADP + H(+). In terms of biological role, sensor kinase that senses the plastoquinone (PQ) redox state involved in stoichiometry adjustment of both photosystems (e.g. long-term adaptation via transcriptional regulation of reaction center genes of photosystems I and II) and state transitions (e.g. short-term adaptation involving reversible post-translational phosphorylation of light-harvesting complex II, LHC II), thus linking photosynthesis with gene expression in chloroplasts. Autophosphorylates, probably on a tyrosine residue. Probably phosphorylates SIGA/SIG1 in response to plastoquinone redox state modification. Reduced PQ suppresses its autophosphorylation activity. Represses expression of a number of chloroplast-encoded genes. The polypeptide is Chloroplast sensor kinase, chloroplastic (Arabidopsis thaliana (Mouse-ear cress)).